The following is a 161-amino-acid chain: Phosphopantetheine adenylyltransferase (161 aa).

Substrate is bound at residue Ser-10. Residues 10-11 and His-18 each bind ATP; that span reads SF. Substrate is bound by residues Lys-42, Ala-75, and Arg-89. Residues 90 to 92, Glu-100, and 125 to 131 contribute to the ATP site; these read GLR and LSPISSS.

This sequence belongs to the bacterial CoaD family. As to quaternary structure, homohexamer. Requires Mg(2+) as cofactor.

Its subcellular location is the cytoplasm. The catalysed reaction is (R)-4'-phosphopantetheine + ATP + H(+) = 3'-dephospho-CoA + diphosphate. Its pathway is cofactor biosynthesis; coenzyme A biosynthesis; CoA from (R)-pantothenate: step 4/5. In terms of biological role, reversibly transfers an adenylyl group from ATP to 4'-phosphopantetheine, yielding dephospho-CoA (dPCoA) and pyrophosphate. In Streptococcus agalactiae serotype Ia (strain ATCC 27591 / A909 / CDC SS700), this protein is Phosphopantetheine adenylyltransferase.